A 79-amino-acid polypeptide reads, in one-letter code: Acyl carrier protein (79 aa).

Positions 2–77 (SNIEERVKKI…QAIDYINAHA (76 aa)) constitute a Carrier domain. S37 is modified (O-(pantetheine 4'-phosphoryl)serine).

The protein belongs to the acyl carrier protein (ACP) family. 4'-phosphopantetheine is transferred from CoA to a specific serine of apo-ACP by AcpS. This modification is essential for activity because fatty acids are bound in thioester linkage to the sulfhydryl of the prosthetic group.

The protein resides in the cytoplasm. Its pathway is lipid metabolism; fatty acid biosynthesis. In terms of biological role, carrier of the growing fatty acid chain in fatty acid biosynthesis. The polypeptide is Acyl carrier protein (Thioalkalivibrio sulfidiphilus (strain HL-EbGR7)).